The sequence spans 233 residues: Uracil-DNA glycosylase (233 aa).

The active-site Proton acceptor is the Asp70.

Belongs to the uracil-DNA glycosylase (UDG) superfamily. UNG family.

The protein localises to the cytoplasm. It catalyses the reaction Hydrolyzes single-stranded DNA or mismatched double-stranded DNA and polynucleotides, releasing free uracil.. Its function is as follows. Excises uracil residues from the DNA which can arise as a result of misincorporation of dUMP residues by DNA polymerase or due to deamination of cytosine. This chain is Uracil-DNA glycosylase, found in Helicobacter pylori (strain Shi470).